Here is a 592-residue protein sequence, read N- to C-terminus: Aspartate--tRNA ligase (592 aa).

Glu173 lines the L-aspartate pocket. An aspartate region spans residues 197-200 (QLFK). Position 219 (Arg219) interacts with L-aspartate. ATP is bound by residues 219–221 (RDE) and Gln228. His448 serves as a coordination point for L-aspartate. Glu482 contacts ATP. Arg489 is an L-aspartate binding site. 534–537 (GLDR) contributes to the ATP binding site.

Belongs to the class-II aminoacyl-tRNA synthetase family. Type 1 subfamily. As to quaternary structure, homodimer.

Its subcellular location is the cytoplasm. The catalysed reaction is tRNA(Asp) + L-aspartate + ATP = L-aspartyl-tRNA(Asp) + AMP + diphosphate. In terms of biological role, catalyzes the attachment of L-aspartate to tRNA(Asp) in a two-step reaction: L-aspartate is first activated by ATP to form Asp-AMP and then transferred to the acceptor end of tRNA(Asp). This is Aspartate--tRNA ligase from Shewanella baltica (strain OS223).